A 324-amino-acid polypeptide reads, in one-letter code: Elongation factor P--(R)-beta-lysine ligase (324 aa).

Residue 75–77 (SPE) coordinates substrate. ATP-binding positions include 99–101 (RNQ) and N108. Y117 is a substrate binding site. Residue 243–244 (EL) participates in ATP binding. Substrate is bound at residue E250. Residue G299 coordinates ATP.

This sequence belongs to the class-II aminoacyl-tRNA synthetase family. EpmA subfamily. In terms of assembly, homodimer.

The catalysed reaction is D-beta-lysine + L-lysyl-[protein] + ATP = N(6)-((3R)-3,6-diaminohexanoyl)-L-lysyl-[protein] + AMP + diphosphate + H(+). With EpmB is involved in the beta-lysylation step of the post-translational modification of translation elongation factor P (EF-P). Catalyzes the ATP-dependent activation of (R)-beta-lysine produced by EpmB, forming a lysyl-adenylate, from which the beta-lysyl moiety is then transferred to the epsilon-amino group of a conserved specific lysine residue in EF-P. The sequence is that of Elongation factor P--(R)-beta-lysine ligase from Buchnera aphidicola subsp. Schizaphis graminum (strain Sg).